A 617-amino-acid chain; its full sequence is MIPMILYASETGNAQDTAERVARAFRANGRAVTCLPMDQFPISALPHTYLLILLTSTHGRGDPPPAMLPLWTALLRSSLPEDILEDVHFALFGLGDSSYERFCYAGKMLLRRMEQLGATKMGEPAWGDERSPNGIEDAFLPWLQQTLDLYLPYLPLISPTPKIIESTVLPPPIYKISPASTSKSVEHDLSLERLSISFPIPNGKPAPVRVEDQARDKASTSRTKPDDWVWATLKKNIRLTSKDWWQDVREIELEFDDPDTKPYTAGSICSLQPQSREDDVNMFLEMMELTSQADEVVTIESLLDEQPLPSHLPPAGTPTTLRSLLTNHLDIRYSPRKSFFEWLRRLSTNEMERERLDEFISDPDEIHTYATRPSRTIVETLADFRFTRIPMSHILEILPPLRRRQFSIASSWEDHPGKVQLLVALIEYKTNLKIPRKGLCSSWLNGLPVGTRIPIHIASPTLFLPQDPEVPIILVGPGTGVAPMRAFVEIRVRQGAAKNTSLYFGCRSSTTDYFFESEWDVHREKGVKIQVAASRDQEERIYVQHLIKRDKEYVKEWIVDKKGWLFISGSSNAMPREVREAVAWCISKEGAGDMTEEESKAYVEQMFEDKRGGEESW.

The region spanning 3 to 147 is the Flavodoxin-like domain; sequence PMILYASETG…AFLPWLQQTL (145 aa). FMN-binding positions include 9–14, 56–59, 94–103, and Glu129; these read SETGNA, STHG, and LGDSSYERFC. In terms of domain architecture, FAD-binding FR-type spans 226-465; it reads DDWVWATLKK…HIASPTLFLP (240 aa). FAD-binding positions include 404 to 407 and 438 to 441; these read RQFS and GLCS. NADP(+) is bound by residues Thr479, 534–535, and 540–544; these read SR and RIYVQ. Trp617 lines the FAD pocket.

Belongs to the NADPH-dependent diflavin oxidoreductase NDOR1 family. It in the N-terminal section; belongs to the flavodoxin family. This sequence in the C-terminal section; belongs to the flavoprotein pyridine nucleotide cytochrome reductase family. Interacts with DRE2; as part of the cytosolic iron-sulfur (Fe-S) protein assembly (CIA) machinery. It depends on FAD as a cofactor. The cofactor is FMN.

It localises to the cytoplasm. Its subcellular location is the mitochondrion. The enzyme catalyses 2 oxidized [2Fe-2S]-[protein] + NADPH = 2 reduced [2Fe-2S]-[protein] + NADP(+) + H(+). NADPH-dependent reductase which is a central component of the cytosolic iron-sulfur (Fe-S) protein assembly (CIA) machinery. Transfers electrons from NADPH via its FAD and FMN prosthetic groups to the [2Fe-2S] cluster of DRE2, another key component of the CIA machinery. In turn, this reduced cluster provides electrons for assembly of cytosolic iron-sulfur cluster proteins. Positively controls H(2)O(2)-induced cell death. This is NADPH-dependent diflavin oxidoreductase 1 from Cryptococcus neoformans var. neoformans serotype D (strain B-3501A) (Filobasidiella neoformans).